A 303-amino-acid chain; its full sequence is MTKIKWLGAFALVFVMLLGGCSLPGLGGASDDTIKIGAQSMTESEIVANMIAQLIEHDTDLNTALVKNLGSNYVQHQAMLGGDIDISATRYSGTDLTSTLGKEAEKDPKKALNIVQNEFQKRFSYKWFDSYGFDNTYAFTVTKKFAEKEHINTVSDLKKNASQYKLGVDNAWLKRKGDGYKGFVSTYGFEFGTTYPMQIGLVYDAVKNGKMDAVLAYSTDGRIKAYDLKILKDDKRFFPPYDCSPVIPEKVLKEHPELEGVINKLIGQIDTETMQELNYEVDGKLKEPSVVAKEFLEKHHYFD.

An N-terminal signal peptide occupies residues 1 to 20 (MTKIKWLGAFALVFVMLLGG). A lipid anchor (N-palmitoyl cysteine) is attached at Cys-21. Residue Cys-21 is the site of S-diacylglycerol cysteine attachment.

It belongs to the OsmX family. In terms of assembly, the complex is composed of two ATP-binding proteins (OpuCA), two transmembrane proteins (OpuCB and OpuCD) and a solute-binding protein (OpuCC).

Its subcellular location is the cell membrane. Member of a high affinity multicomponent binding-protein-dependent transport system for glycine betaine, carnitine, and choline. The polypeptide is Glycine betaine/carnitine/choline-binding protein OpuCC (opuCC) (Bacillus subtilis (strain 168)).